The chain runs to 363 residues: D-proline dehydrogenase (363 aa).

3-17 lines the FAD pocket; that stretch reads VAIVGGGIIGLFTAY.

It belongs to the DadA oxidoreductase family. In terms of assembly, homotetramer. Requires FAD as cofactor.

The protein resides in the cell membrane. It catalyses the reaction D-proline + A = 1-pyrroline-2-carboxylate + AH2. Catalyzes the dehydrogenation of D-proline. Can also use other D-amino acids, but with lower efficiency. The protein is D-proline dehydrogenase (dpdh) of Pyrobaculum islandicum (strain DSM 4184 / JCM 9189 / GEO3).